The sequence spans 65 residues: Large ribosomal subunit protein bL32 (65 aa).

This sequence belongs to the bacterial ribosomal protein bL32 family.

This chain is Large ribosomal subunit protein bL32 (rpmF), found in Rickettsia prowazekii (strain Madrid E).